A 132-amino-acid polypeptide reads, in one-letter code: UPF0299 membrane protein YohJ (132 aa).

4 consecutive transmembrane segments (helical) span residues 8–28 (IWQY…GIFI), 31–51 (LLPV…VLLA), 63–83 (GCYL…VGVM), and 93–113 (FGPV…VVSW).

This sequence belongs to the UPF0299 family.

It is found in the cell inner membrane. This chain is UPF0299 membrane protein YohJ, found in Escherichia fergusonii (strain ATCC 35469 / DSM 13698 / CCUG 18766 / IAM 14443 / JCM 21226 / LMG 7866 / NBRC 102419 / NCTC 12128 / CDC 0568-73).